The following is a 148-amino-acid chain: Sec-independent protein translocase protein TatB (148 aa).

A helical transmembrane segment spans residues 2 to 22 (FNDIGPLELVTLVVLAVLVFG). 2 stretches are compositionally biased toward basic and acidic residues: residues 100–110 (VTDAVHGRESE) and 128–148 (MTKK…ADAT). Positions 100–148 (VTDAVHGRESETSASSSSANGSAGGTVDMTKKREQLEADERPPFDADAT) are disordered.

The protein belongs to the TatB family. As to quaternary structure, the Tat system comprises two distinct complexes: a TatABC complex, containing multiple copies of TatA, TatB and TatC subunits, and a separate TatA complex, containing only TatA subunits. Substrates initially bind to the TatABC complex, which probably triggers association of the separate TatA complex to form the active translocon.

It localises to the cell membrane. In terms of biological role, part of the twin-arginine translocation (Tat) system that transports large folded proteins containing a characteristic twin-arginine motif in their signal peptide across membranes. Together with TatC, TatB is part of a receptor directly interacting with Tat signal peptides. TatB may form an oligomeric binding site that transiently accommodates folded Tat precursor proteins before their translocation. This chain is Sec-independent protein translocase protein TatB, found in Streptomyces avermitilis (strain ATCC 31267 / DSM 46492 / JCM 5070 / NBRC 14893 / NCIMB 12804 / NRRL 8165 / MA-4680).